The following is a 72-amino-acid chain: Translation initiation factor IF-1 (72 aa).

In terms of domain architecture, S1-like spans 1-72 (MAKEELLEFP…TKGRITYRFK (72 aa)).

This sequence belongs to the IF-1 family. Component of the 30S ribosomal translation pre-initiation complex which assembles on the 30S ribosome in the order IF-2 and IF-3, IF-1 and N-formylmethionyl-tRNA(fMet); mRNA recruitment can occur at any time during PIC assembly.

Its subcellular location is the cytoplasm. Its function is as follows. One of the essential components for the initiation of protein synthesis. Stabilizes the binding of IF-2 and IF-3 on the 30S subunit to which N-formylmethionyl-tRNA(fMet) subsequently binds. Helps modulate mRNA selection, yielding the 30S pre-initiation complex (PIC). Upon addition of the 50S ribosomal subunit IF-1, IF-2 and IF-3 are released leaving the mature 70S translation initiation complex. In Maricaulis maris (strain MCS10) (Caulobacter maris), this protein is Translation initiation factor IF-1.